A 345-amino-acid polypeptide reads, in one-letter code: Cytoskeleton protein RodZ (345 aa).

At 1–111 (MNTEASQDQT…LGKKHKKRDG (111 aa)) the chain is on the cytoplasmic side. Positions 19-79 (LRQARESLGL…KLVHLPEDEL (61 aa)) constitute an HTH cro/C1-type domain. Positions 30 to 49 (QQTVAERLCLKVSTIRDIEE) form a DNA-binding region, H-T-H motif. A helical; Signal-anchor for type II membrane protein transmembrane segment spans residues 112–132 (WLMSFTWLIVLVVLGLTGAWW). Residues 133–345 (WQNHQAQQAE…RVARLTVGVE (213 aa)) lie on the Periplasmic side of the membrane. The tract at residues 151 to 260 (SAQLSQNGGQ…LPTADAGVSG (110 aa)) is disordered. Polar residues predominate over residues 188-225 (PLTNHSGSAITNSATTSSVPKTTSTEPVDTANTNTTMH). Residues 229 to 241 (AASAAVSPSQVPQ) are compositionally biased toward low complexity.

The protein belongs to the RodZ family.

It is found in the cell inner membrane. Cytoskeletal protein that is involved in cell-shape control through regulation of the length of the long axis. The chain is Cytoskeleton protein RodZ from Yersinia pestis (strain Pestoides F).